Reading from the N-terminus, the 505-residue chain is MGKWWFNSIEGLEHRCGLSKSMDSLGYLIGNTSGSEDPTLNDTNKNIPSWGHSGSYSCNNVDHFFSVRDIWSFISDGTFLVRDNNGNCYSVYLDIENQVFEIDNDSSFLSELESSFSSYMNSSYLNSGSKSDNRYYDRYTYDIKYSWNNHINSCIDSYLRSEINIDSYISSGSDNYRDSYIYSYICSGESVSNSKSGSSSIRTGGNSSDFNRRGRSNDFDLNKKYRHLWVQCENCYGLNYKKFVSFKMHICEQCGYHLKMSSSERIELSIDSGTWDPMDEDMVSMDPIQFHSEEEPYRDRIDSYQRKTGLTEAVQTGIGQLNGIPVAIGVMDFQFMGGSMGSVVGEKITRLIEYATNRSLPVIMVCASGGARMQEGSLSLMQMAKISSASYDYQLNKKLFYVSILTSPTTGGVTASFGMLGDIIIAEPNAYIAFAGKRVIEQTLNKTVPDGSQAAEYSFHKGLFDPIVPRNPLKGVLNELFRLHGFFPLNQNSSRALGSVICSEL.

Low complexity predominate over residues 189–205; that stretch reads ESVSNSKSGSSSIRTGG. Residues 189 to 213 form a disordered region; the sequence is ESVSNSKSGSSSIRTGGNSSDFNRR. Residues 228-499 form the CoA carboxyltransferase N-terminal domain; the sequence is LWVQCENCYG…NQNSSRALGS (272 aa). 4 residues coordinate Zn(2+): C232, C235, C251, and C254. The C4-type zinc finger occupies 232-254; the sequence is CENCYGLNYKKFVSFKMHICEQC.

This sequence belongs to the AccD/PCCB family. In terms of assembly, acetyl-CoA carboxylase is a heterohexamer composed of biotin carboxyl carrier protein, biotin carboxylase and 2 subunits each of ACCase subunit alpha and ACCase plastid-coded subunit beta (accD). It depends on Zn(2+) as a cofactor.

The protein localises to the plastid. Its subcellular location is the chloroplast stroma. It carries out the reaction N(6)-carboxybiotinyl-L-lysyl-[protein] + acetyl-CoA = N(6)-biotinyl-L-lysyl-[protein] + malonyl-CoA. The protein operates within lipid metabolism; malonyl-CoA biosynthesis; malonyl-CoA from acetyl-CoA: step 1/1. Functionally, component of the acetyl coenzyme A carboxylase (ACC) complex. Biotin carboxylase (BC) catalyzes the carboxylation of biotin on its carrier protein (BCCP) and then the CO(2) group is transferred by the transcarboxylase to acetyl-CoA to form malonyl-CoA. The protein is Acetyl-coenzyme A carboxylase carboxyl transferase subunit beta, chloroplastic of Calycanthus floridus var. glaucus (Eastern sweetshrub).